Reading from the N-terminus, the 317-residue chain is UV DNA damage endonuclease (317 aa).

This sequence belongs to the uve1/UvsE family.

Component in a DNA repair pathway. Removal of UV LIGHT damaged nucleotides. Recognizes pyrimidine dimers and cleave a phosphodiester bond immediately 5' to the lesion. This chain is UV DNA damage endonuclease, found in Bacillus cereus (strain 03BB102).